We begin with the raw amino-acid sequence, 96 residues long: Teretoxin Tgu6.1 (96 aa).

The first 16 residues, 1-16, serve as a signal peptide directing secretion; the sequence is MRPFLVFVLIVSVSLA. The propeptide occupies 17-52; it reads FSFEDMPNKGGDSVASITADQARGHKRNPLFPFAQR.

Contains 3 disulfide bonds. As to expression, expressed by the venom duct.

It is found in the secreted. Functionally, the recombinant protein causes paralysis to polychaete worms (Nereis virens), the natural prey of terebrid snails. The protein is Teretoxin Tgu6.1 of Terebra guttata (White spotted auger snail).